A 178-amino-acid chain; its full sequence is MILSDRDIRALLAIGDLVVEPLSGDTVRENGLDLRLGRGFCRFKRSDRVLDPRAPGSPGEFYECGEGDEIIVGPGEHMLLHTQEYIRLPGYVAGLVNLRSTWARTGIYIPATVVDAGFEGQLTIEVVGSGFPVKLYPGDRFLHLVLVKLQSPAMNPYRGRYQGQRGVRLPKLFAKNTG.

DCTP is bound by residues 99 to 104 (RSTWAR) and aspartate 115. Residue glutamate 125 is the Proton donor/acceptor of the active site. 2 residues coordinate dCTP: tyrosine 157 and glutamine 164.

It belongs to the dCTP deaminase family. As to quaternary structure, homotrimer.

The catalysed reaction is dCTP + H2O + H(+) = dUTP + NH4(+). The protein operates within pyrimidine metabolism; dUMP biosynthesis; dUMP from dCTP (dUTP route): step 1/2. Functionally, catalyzes the deamination of dCTP to dUTP. The polypeptide is dCTP deaminase (Aeropyrum pernix (strain ATCC 700893 / DSM 11879 / JCM 9820 / NBRC 100138 / K1)).